We begin with the raw amino-acid sequence, 121 residues long: Non-structural protein 8 (121 aa).

A signal peptide spans 1–15; the sequence is MKLLIVFGLLASVYC. Residues 19–121 form the SARS ORF8 Ig-like domain; sequence ECSIQECCEN…HDVRVVLDFI (103 aa). Cystine bridges form between Cys25–Cys90, Cys37–Cys102, and Cys61–Cys83.

This chain is Non-structural protein 8, found in Bat coronavirus HKU3 (BtCoV).